Here is a 193-residue protein sequence, read N- to C-terminus: Non-specific lipid transfer protein GPI-anchored 10 (193 aa).

An N-terminal signal peptide occupies residues 1–24 (MASSTLLITLLISLSAFFLRMVLA). Cystine bridges form between Cys-30/Cys-71, Cys-40/Cys-55, Cys-56/Cys-98, and Cys-69/Cys-107. Asn-76, Asn-87, and Asn-103 each carry an N-linked (GlcNAc...) asparagine glycan. Residues 109–140 (SSFPGEAPSDSSSVAPPPSSSTGSQISQGAKN) form a disordered region. Over residues 116–132 (PSDSSSVAPPPSSSTGS) the composition is skewed to low complexity. A glycan (N-linked (GlcNAc...) asparagine) is linked at Asn-140. Ser-168 carries the GPI-anchor amidated serine lipid modification. A propeptide spans 169 to 193 (SGSKSEIQLTIFALAAILPAALLLI) (removed in mature form).

Belongs to the plant LTP family.

The protein resides in the cell membrane. Its function is as follows. Probable lipid transfer protein. This Arabidopsis thaliana (Mouse-ear cress) protein is Non-specific lipid transfer protein GPI-anchored 10.